The primary structure comprises 363 residues: MAP kinase kinase skh1/pek1 (363 aa).

The 265-residue stretch at 79–343 (ILYMNSLGEG…PQKMLTHPWV (265 aa)) folds into the Protein kinase domain. ATP contacts are provided by residues 85-93 (LGEGVSGSV) and lysine 108. Aspartate 206 (proton acceptor) is an active-site residue. Position 234 is a phosphoserine (serine 234). The residue at position 238 (threonine 238) is a Phosphothreonine.

The protein belongs to the protein kinase superfamily. STE Ser/Thr protein kinase family. MAP kinase kinase subfamily.

It catalyses the reaction L-seryl-[protein] + ATP = O-phospho-L-seryl-[protein] + ADP + H(+). The catalysed reaction is L-threonyl-[protein] + ATP = O-phospho-L-threonyl-[protein] + ADP + H(+). The enzyme catalyses L-tyrosyl-[protein] + ATP = O-phospho-L-tyrosyl-[protein] + ADP + H(+). With respect to regulation, activated by mkh1. Its function is as follows. Involved in the mkh1 signal transduction pathway that plays a role in cell wall integrity. Activates spm1/pmk1 via phosphorylation. The chain is MAP kinase kinase skh1/pek1 (skh1) from Schizosaccharomyces pombe (strain 972 / ATCC 24843) (Fission yeast).